Here is a 152-residue protein sequence, read N- to C-terminus: MYCPFCHNEQSRVIDSRVIDSGTSIRRRRECAACKGRFTTIEKAVLSVVKRNGLAEPFSRDKLIRGVKRACQGRDVSDDALKKLAQEVEETVRSHGSSQVNANDIGLAILEPLRDLDEVAYLRFASVYKSFESADDFESEIRLMRRRDRDSF.

A zinc finger lies at C3–C34. One can recognise an ATP-cone domain in the interval L46 to D136.

This sequence belongs to the NrdR family. The cofactor is Zn(2+).

In terms of biological role, negatively regulates transcription of bacterial ribonucleotide reductase nrd genes and operons by binding to NrdR-boxes. This is Transcriptional repressor NrdR from Corynebacterium aurimucosum (strain ATCC 700975 / DSM 44827 / CIP 107346 / CN-1) (Corynebacterium nigricans).